Reading from the N-terminus, the 24-residue chain is Pyruvate kinase (24 aa).

It belongs to the pyruvate kinase family. Homotetramer. The cofactor is Mg(2+). It depends on K(+) as a cofactor.

The enzyme catalyses pyruvate + ATP = phosphoenolpyruvate + ADP + H(+). It functions in the pathway carbohydrate degradation; glycolysis; pyruvate from D-glyceraldehyde 3-phosphate: step 5/5. This chain is Pyruvate kinase (pyk), found in Clostridium pasteurianum.